Consider the following 298-residue polypeptide: Probable phosphite transport system-binding protein HtxB (298 aa).

The N-terminal stretch at 1–33 (MQVFTLFSKFKKALTRAILAFIATIIVCTPAQA) is a signal peptide.

The protein belongs to the phosphate/phosphite/phosphonate binding protein family.

Its function is as follows. Probably forms part of a binding-protein-dependent hypophosphite transporter. This is Probable phosphite transport system-binding protein HtxB (htxB) from Stutzerimonas stutzeri (Pseudomonas stutzeri).